Reading from the N-terminus, the 746-residue chain is Stromal interaction molecule 2 (746 aa).

The signal sequence occupies residues 1-14 (MLLFGLLVAGVADG). Residues 15-218 (CDLVPRHLRG…RPPHNWMKDF (204 aa)) lie on the Extracellular side of the membrane. Ser28 bears the Phosphoserine mark. One can recognise an EF-hand domain in the interval 67–102 (FSLEALQTIHKQMDDDKDGGIEVDESDEFIREDMKY). Positions 80, 82, 84, and 91 each coordinate Ca(2+). Residue Asn135 is glycosylated (N-linked (GlcNAc...) asparagine). Residues 136 to 204 (WTLEDTLQWL…QLKALDVVLF (69 aa)) enclose the SAM domain. The chain crosses the membrane as a helical span at residues 219–235 (ILTISIVIGVGGCWFAY). At 236-746 (TQNKTSKEHV…IKSLFKKKSK (511 aa)) the chain is on the cytoplasmic side. The stretch at 247–394 (KMMKDLESLQ…EKIKKKRSTV (148 aa)) forms a coiled coil. Disordered regions lie at residues 490-562 (PIVP…PDIL) and 592-651 (DTAS…RGSP). Ser523 carries the phosphoserine modification. A compositionally biased stretch (low complexity) spans 527-539 (QRAQLPAHAPLAA). The span at 540-549 (HPRHPHHPQH) shows a compositional bias: basic residues. A phosphoserine mark is found at Ser609 and Ser621. Positions 625–637 (ISRDELSLEDSSR) are enriched in basic and acidic residues. Phosphoserine is present on residues Ser640, Ser650, Ser661, Ser665, Ser680, and Ser697. Residues 684–746 (LSSGIPVPHP…IKSLFKKKSK (63 aa)) form a disordered region. A compositionally biased stretch (basic and acidic residues) spans 723–732 (DLCHNGEKSK). Basic residues predominate over residues 733 to 746 (KPSKIKSLFKKKSK).

Oligomer with STIM1. Interacts with ORAI1. Glycosylated. Post-translationally, phosphorylated predominantly on Ser residues.

The protein localises to the endoplasmic reticulum membrane. Functionally, plays a role in mediating store-operated Ca(2+) entry (SOCE), a Ca(2+) influx following depletion of intracellular Ca(2+) stores. Functions as a highly sensitive Ca(2+) sensor in the endoplasmic reticulum which activates both store-operated and store-independent Ca(2+)-influx. Regulates basal cytosolic and endoplasmic reticulum Ca(2+) concentrations. Upon mild variations of the endoplasmic reticulum Ca(2+) concentration, translocates from the endoplasmic reticulum to the plasma membrane where it probably activates the Ca(2+) release-activated Ca(2+) (CRAC) channels ORAI1, ORAI2 and ORAI3. May inhibit STIM1-mediated Ca(2+) influx. The chain is Stromal interaction molecule 2 (Stim2) from Mus musculus (Mouse).